A 203-amino-acid chain; its full sequence is Urease accessory protein UreG (203 aa).

Residue 14–21 (GPVGSGKT) coordinates GTP.

The protein belongs to the SIMIBI class G3E GTPase family. UreG subfamily. As to quaternary structure, homodimer. UreD, UreF and UreG form a complex that acts as a GTP-hydrolysis-dependent molecular chaperone, activating the urease apoprotein by helping to assemble the nickel containing metallocenter of UreC. The UreE protein probably delivers the nickel.

The protein localises to the cytoplasm. Its function is as follows. Facilitates the functional incorporation of the urease nickel metallocenter. This process requires GTP hydrolysis, probably effectuated by UreG. The chain is Urease accessory protein UreG from Rhizobium leguminosarum bv. viciae.